A 222-amino-acid polypeptide reads, in one-letter code: Leucyl/phenylalanyl-tRNA--protein transferase (222 aa).

Belongs to the L/F-transferase family.

The protein localises to the cytoplasm. It carries out the reaction N-terminal L-lysyl-[protein] + L-leucyl-tRNA(Leu) = N-terminal L-leucyl-L-lysyl-[protein] + tRNA(Leu) + H(+). The catalysed reaction is N-terminal L-arginyl-[protein] + L-leucyl-tRNA(Leu) = N-terminal L-leucyl-L-arginyl-[protein] + tRNA(Leu) + H(+). The enzyme catalyses L-phenylalanyl-tRNA(Phe) + an N-terminal L-alpha-aminoacyl-[protein] = an N-terminal L-phenylalanyl-L-alpha-aminoacyl-[protein] + tRNA(Phe). Functions in the N-end rule pathway of protein degradation where it conjugates Leu, Phe and, less efficiently, Met from aminoacyl-tRNAs to the N-termini of proteins containing an N-terminal arginine or lysine. The protein is Leucyl/phenylalanyl-tRNA--protein transferase of Legionella pneumophila (strain Corby).